A 685-amino-acid polypeptide reads, in one-letter code: Multicopper oxidase VdtB (685 aa).

Residues 1 to 17 form the signal peptide; it reads MPAYLLLLACNVLLVLG. Plastocyanin-like domains are found at residues 26 to 139 and 168 to 368; these read LTWE…IRRK and IMML…RYKN. N-linked (GlcNAc...) asparagine glycosylation occurs at Asn71. 4 residues coordinate Cu cation: His75, His77, His119, and His121. Residues Asn178, Asn229, Asn253, Asn432, and Asn475 are each glycosylated (N-linked (GlcNAc...) asparagine). The Plastocyanin-like 3 domain occupies 466-585; it reads DDDLIIRTQN…DNGMAMAILD (120 aa). A Cu cation-binding site is contributed by His500. Asn517 carries an N-linked (GlcNAc...) asparagine glycan. The helical transmembrane segment at 627 to 647 threads the bilayer; sequence SLVWAGGAAVVLLSLFIGGLW.

It belongs to the multicopper oxidase family.

It is found in the membrane. The enzyme catalyses 4 semiviriditoxin + O2 = 2 (M)-viriditoxin + 2 H2O. It participates in secondary metabolite biosynthesis. In terms of biological role, multicopper oxidase; part of the gene cluster that mediates the biosynthesis of viriditoxin, one of the 'classical' secondary metabolites produced by fungi and that has antibacterial activity. The first step is performed by the polyketide synthase VdtA which condenses one acetyl-CoA and 6 malonyl-CoA units to form the heptaketide monomer backbone of viriditoxin. The product of VdtA is then O-methylated on C7 by the O-methyltransferase VdtC. The O-methyl group is important for the stereoselective coupling of the monomers at the final step of viriditoxin biosynthesis. The short-chain dehydrogenase/reductase VdtF then acts as a stereospecific reductase converting the pyrone to dihydropyrone via the reduction of the C3-C4 double bond. The FAD-binding monooxygenase VdtE then converts the ketone group into a methyl-ester group to yield semi-viriditoxin. Finally, the laccase VdtB is involved in dimerization of 2 semi-viriditoxin molecules to yield the final viriditoxin. VdtB is responsible for the regioselective 6,6'-coupling of semi-viriditoxin, which yields (M)-viriditoxin and (P)-viriditoxin at a ratio of 1:2. The non-catalytic carboxylesterase-like protein VdtD affects the stereochemistical outcome of the coupling. The highly reducing polyketide synthase VdtX is not involved in viriditoxin synthesis, but might possibly play a role in the production of additional metabolites not identified yet. The protein is Multicopper oxidase VdtB of Byssochlamys spectabilis (Paecilomyces variotii).